Reading from the N-terminus, the 247-residue chain is E3 ubiquitin ligase TRIM40 (247 aa).

The RING-type zinc-finger motif lies at 12 to 55 (CPICLDPLKEAVSTDCRHLFCRMCLIRHMDKASVSGVLSCPVCR). The segment at 64–105 (GDNYICHTHQKRVCRFCESSRHLLCEECLQSPEHRAHTELSI) adopts a B box-type zinc-finger fold. 4 residues coordinate Zn(2+): cysteine 69, histidine 72, cysteine 91, and histidine 97. Residues 111–148 (HYKERLNRRSRKLRKDLGDLQRLKAQEEKMLQALQVDW) are a coiled coil.

This sequence belongs to the TRIM/RBCC family. In terms of assembly, interacts with NEDD8.

It carries out the reaction S-ubiquitinyl-[E2 ubiquitin-conjugating enzyme]-L-cysteine + [acceptor protein]-L-lysine = [E2 ubiquitin-conjugating enzyme]-L-cysteine + N(6)-ubiquitinyl-[acceptor protein]-L-lysine.. E3 ubiquitin-protein ligase that plays a role in the limitation of the innate immune response. Mediates inhibition of the RLR signaling pathway by ubiquitinating RIGI and IFIH1 receptors, leading to their proteasomal degradation. Also promotes the neddylation of IKBKG/NEMO, stabilizing NFKBIA, and thereby inhibiting of NF-kappa-B nuclear translocation and activation. This chain is E3 ubiquitin ligase TRIM40 (Trim40), found in Rattus norvegicus (Rat).